The primary structure comprises 117 residues: Large ribosomal subunit protein bL20 (117 aa).

Belongs to the bacterial ribosomal protein bL20 family.

Binds directly to 23S ribosomal RNA and is necessary for the in vitro assembly process of the 50S ribosomal subunit. It is not involved in the protein synthesizing functions of that subunit. The polypeptide is Large ribosomal subunit protein bL20 (Brachyspira hyodysenteriae (strain ATCC 49526 / WA1)).